The primary structure comprises 844 residues: DNA mismatch repair protein MutS (844 aa).

Position 610 to 617 (610 to 617 (GPNMGGKS)) interacts with ATP.

It belongs to the DNA mismatch repair MutS family.

Its function is as follows. This protein is involved in the repair of mismatches in DNA. It is possible that it carries out the mismatch recognition step. This protein has a weak ATPase activity. This Francisella tularensis subsp. tularensis (strain WY96-3418) protein is DNA mismatch repair protein MutS.